We begin with the raw amino-acid sequence, 343 residues long: 3-dehydroquinate synthase (343 aa).

NAD(+)-binding positions include 61–66 (SGEKYK), 95–99 (GVISD), 119–120 (TT), Lys-132, Lys-141, and 159–162 (FLKT). Zn(2+) contacts are provided by Glu-174, His-231, and His-248.

It belongs to the sugar phosphate cyclases superfamily. Dehydroquinate synthase family. NAD(+) serves as cofactor. The cofactor is Co(2+). Zn(2+) is required as a cofactor.

Its subcellular location is the cytoplasm. The catalysed reaction is 7-phospho-2-dehydro-3-deoxy-D-arabino-heptonate = 3-dehydroquinate + phosphate. It participates in metabolic intermediate biosynthesis; chorismate biosynthesis; chorismate from D-erythrose 4-phosphate and phosphoenolpyruvate: step 2/7. Catalyzes the conversion of 3-deoxy-D-arabino-heptulosonate 7-phosphate (DAHP) to dehydroquinate (DHQ). The polypeptide is 3-dehydroquinate synthase (Helicobacter pylori (strain J99 / ATCC 700824) (Campylobacter pylori J99)).